The chain runs to 83 residues: Cytochrome b559 subunit alpha (83 aa).

Residues 21–35 form a helical membrane-spanning segment; sequence VIHSITVPSLFIAGW. Heme is bound at residue His-23.

It belongs to the PsbE/PsbF family. In terms of assembly, heterodimer of an alpha subunit and a beta subunit. PSII is composed of 1 copy each of membrane proteins PsbA, PsbB, PsbC, PsbD, PsbE, PsbF, PsbH, PsbI, PsbJ, PsbK, PsbL, PsbM, PsbT, PsbX, PsbY, PsbZ, Psb30/Ycf12, at least 3 peripheral proteins of the oxygen-evolving complex and a large number of cofactors. It forms dimeric complexes. Heme b is required as a cofactor.

It localises to the plastid. Its subcellular location is the chloroplast thylakoid membrane. In terms of biological role, this b-type cytochrome is tightly associated with the reaction center of photosystem II (PSII). PSII is a light-driven water:plastoquinone oxidoreductase that uses light energy to abstract electrons from H(2)O, generating O(2) and a proton gradient subsequently used for ATP formation. It consists of a core antenna complex that captures photons, and an electron transfer chain that converts photonic excitation into a charge separation. The sequence is that of Cytochrome b559 subunit alpha from Oltmannsiellopsis viridis (Marine flagellate).